Consider the following 969-residue polypeptide: Protein translocase subunit SecA (969 aa).

Residues Q99, G117–T121, and D631 contribute to the ATP site.

Belongs to the SecA family. Monomer and homodimer. Part of the essential Sec protein translocation apparatus which comprises SecA, SecYEG and auxiliary proteins SecDF. Other proteins may also be involved.

The protein resides in the cell inner membrane. It is found in the cytoplasm. The enzyme catalyses ATP + H2O + cellular proteinSide 1 = ADP + phosphate + cellular proteinSide 2.. Part of the Sec protein translocase complex. Interacts with the SecYEG preprotein conducting channel. Has a central role in coupling the hydrolysis of ATP to the transfer of proteins into and across the cell membrane, serving as an ATP-driven molecular motor driving the stepwise translocation of polypeptide chains across the membrane. This is Protein translocase subunit SecA from Chlamydia felis (strain Fe/C-56) (Chlamydophila felis).